Consider the following 308-residue polypeptide: D-alanine--D-alanine ligase (308 aa).

Residues 104-301 (KQIWQGSDLP…FDELCVAILD (198 aa)) form the ATP-grasp domain. 130-185 (IAELGLPVIIKPVHEGSSVGMSKVEKAEDFAAAIEKATQHDAVVMAEKWITGREFT) serves as a coordination point for ATP. Residues Asp255, Glu268, and Asn270 each coordinate Mg(2+).

The protein belongs to the D-alanine--D-alanine ligase family. Mg(2+) is required as a cofactor. Mn(2+) serves as cofactor.

It localises to the cytoplasm. The enzyme catalyses 2 D-alanine + ATP = D-alanyl-D-alanine + ADP + phosphate + H(+). Its pathway is cell wall biogenesis; peptidoglycan biosynthesis. In terms of biological role, cell wall formation. The sequence is that of D-alanine--D-alanine ligase from Acinetobacter baumannii (strain AB307-0294).